The chain runs to 101 residues: ATP-dependent Clp protease adapter protein ClpS 1 (101 aa).

Belongs to the ClpS family. Binds to the N-terminal domain of the chaperone ClpA.

Functionally, involved in the modulation of the specificity of the ClpAP-mediated ATP-dependent protein degradation. The protein is ATP-dependent Clp protease adapter protein ClpS 1 of Bradyrhizobium diazoefficiens (strain JCM 10833 / BCRC 13528 / IAM 13628 / NBRC 14792 / USDA 110).